The following is a 208-amino-acid chain: dITP/XTP pyrophosphatase (208 aa).

Substrate is bound at residue 7–12 (SNNAKK). Positions 39 and 68 each coordinate Mg(2+). Aspartate 68 serves as the catalytic Proton acceptor. Substrate is bound by residues serine 69, 162 to 165 (FGYD), lysine 185, and 190 to 191 (HR).

This sequence belongs to the HAM1 NTPase family. As to quaternary structure, homodimer. Requires Mg(2+) as cofactor.

The catalysed reaction is XTP + H2O = XMP + diphosphate + H(+). The enzyme catalyses dITP + H2O = dIMP + diphosphate + H(+). It catalyses the reaction ITP + H2O = IMP + diphosphate + H(+). Functionally, pyrophosphatase that catalyzes the hydrolysis of nucleoside triphosphates to their monophosphate derivatives, with a high preference for the non-canonical purine nucleotides XTP (xanthosine triphosphate), dITP (deoxyinosine triphosphate) and ITP. Seems to function as a house-cleaning enzyme that removes non-canonical purine nucleotides from the nucleotide pool, thus preventing their incorporation into DNA/RNA and avoiding chromosomal lesions. The polypeptide is dITP/XTP pyrophosphatase (Methylibium petroleiphilum (strain ATCC BAA-1232 / LMG 22953 / PM1)).